Here is a 178-residue protein sequence, read N- to C-terminus: Adenine phosphoribosyltransferase (178 aa).

It belongs to the purine/pyrimidine phosphoribosyltransferase family. In terms of assembly, homodimer.

It localises to the cytoplasm. The catalysed reaction is AMP + diphosphate = 5-phospho-alpha-D-ribose 1-diphosphate + adenine. It participates in purine metabolism; AMP biosynthesis via salvage pathway; AMP from adenine: step 1/1. Its function is as follows. Catalyzes a salvage reaction resulting in the formation of AMP, that is energically less costly than de novo synthesis. This chain is Adenine phosphoribosyltransferase, found in Cereibacter sphaeroides (strain ATCC 17025 / ATH 2.4.3) (Rhodobacter sphaeroides).